The following is a 344-amino-acid chain: Sesquiterpene synthase 9 (344 aa).

Asp-88, Asn-224, Ser-228, and Glu-232 together coordinate Mg(2+). Residues 88-92 carry the DDXXD motif motif; sequence DEYSD. An NSE/DTE motif motif is present at residues 224 to 232; that stretch reads NDMLSWNVE. Residues Arg-313 and Tyr-314 each coordinate (2E,6E)-farnesyl diphosphate.

It belongs to the terpene synthase family. The cofactor is Mg(2+).

In terms of biological role, terpene cyclase that catalyzes the cyclization of farnesyl diphosphate (FPP) to a single major sesquiterpene scaffold whose chemical structure is still unknown. This chain is Sesquiterpene synthase 9, found in Postia placenta (strain ATCC 44394 / Madison 698-R) (Brown rot fungus).